The sequence spans 79 residues: Probable [Fe-S]-dependent transcriptional repressor (79 aa).

Iron-sulfur cluster contacts are provided by cysteine 56, cysteine 61, cysteine 64, and cysteine 71.

Belongs to the FeoC family.

In terms of biological role, may function as a transcriptional regulator that controls feoABC expression. The protein is Probable [Fe-S]-dependent transcriptional repressor of Klebsiella pneumoniae (strain 342).